The sequence spans 156 residues: MPRRRSIEPRKILPDPKFGSELLAKFINVLMVDGKKSIAESIVYNALETLAQRSGKDALEAFEIALENVRPTVEVKSRRVGGSTYQVPVEVRPTRRNALAMRWIVEAARKRGDKSMAMRLANELSDAADNKGSAVKKREDVHRMAEANKAFAHYRW.

This sequence belongs to the universal ribosomal protein uS7 family. In terms of assembly, part of the 30S ribosomal subunit. Contacts proteins S9 and S11.

Its function is as follows. One of the primary rRNA binding proteins, it binds directly to 16S rRNA where it nucleates assembly of the head domain of the 30S subunit. Is located at the subunit interface close to the decoding center, probably blocks exit of the E-site tRNA. The chain is Small ribosomal subunit protein uS7 from Glaesserella parasuis serovar 5 (strain SH0165) (Haemophilus parasuis).